Here is a 394-residue protein sequence, read N- to C-terminus: MKNCVIVSAVRTAIGSFNGSLASTSAIDLGATVIKAAIERAKIDSQHVDEVIMGNVLQAGLGQNPARQALLKSGLAETVCGFTVNKVCGSGLKSVALAAQAIQAGQAQSIVAGGMENMSLAPYLLDAKARSGYRLGDGQVYDVILRDGLMCATHGYHMGITAENVAKEYGITREMQDELALHSQRKAAAAIESGAFTAEIVPVNVVTRKKTFVFSQDEFPKANSTAEALGALRPAFDKAGTVTAGNASGINDGAAALVIMEESAALAAGLTPLARIKSYASGGVPPALMGMGPVPATQKALQLAGLQLADIDLIEANEAFAAQFLAVGKNLGFDSEKVNVNGGAIALGHPIGASGARILVTLLHAMQARDKTLGLATLCIGGGQGIAMVIERLN.

The active-site Acyl-thioester intermediate is cysteine 88. Active-site proton acceptor residues include histidine 349 and cysteine 379.

The protein belongs to the thiolase-like superfamily. Thiolase family.

It localises to the cytoplasm. It catalyses the reaction 2 acetyl-CoA = acetoacetyl-CoA + CoA. It participates in metabolic intermediate biosynthesis; (R)-mevalonate biosynthesis; (R)-mevalonate from acetyl-CoA: step 1/3. The polypeptide is Acetyl-CoA acetyltransferase (atoB) (Escherichia coli (strain K12)).